The sequence spans 183 residues: Glutamyl-tRNA(Gln) amidotransferase subunit F, mitochondrial (183 aa).

The protein belongs to the GatF family. In terms of assembly, subunit of the heterotrimeric GatFAB amidotransferase (AdT) complex, composed of A (HER2), B (PET112) and F (YGR102C) subunits.

The protein localises to the mitochondrion inner membrane. The catalysed reaction is L-glutamyl-tRNA(Gln) + L-glutamine + ATP + H2O = L-glutaminyl-tRNA(Gln) + L-glutamate + ADP + phosphate + H(+). Allows the formation of correctly charged Gln-tRNA(Gln) through the transamidation of misacylated Glu-tRNA(Gln) in the mitochondria. The reaction takes place in the presence of glutamine and ATP through an activated gamma-phospho-Glu-tRNA(Gln). Required for proper protein synthesis within the mitochondrion. The protein is Glutamyl-tRNA(Gln) amidotransferase subunit F, mitochondrial of Saccharomyces cerevisiae (strain ATCC 204508 / S288c) (Baker's yeast).